The primary structure comprises 83 residues: Small ribosomal subunit protein bS16 (83 aa).

The protein belongs to the bacterial ribosomal protein bS16 family.

The sequence is that of Small ribosomal subunit protein bS16 from Borrelia hermsii (strain HS1 / DAH).